A 3066-amino-acid polypeptide reads, in one-letter code: Genome polyprotein (3066 aa).

The region spanning 168–308 (TSQCRKPTYV…VENMEDIQHY (141 aa)) is the Peptidase S30 domain. Catalysis depends on for P1 proteinase activity residues His221, Glu230, and Ser262. The short motif at 361–364 (KLSC) is the Involved in interaction with stylet and aphid transmission element. An Involved in virions binding and aphid transmission motif is present at residues 617 to 619 (PTK). Residues 643–765 (MYIAKEGFCY…QSEMKFYRVG (123 aa)) form the Peptidase C6 domain. Catalysis depends on for helper component proteinase activity residues Cys651 and His724. The Helicase ATP-binding domain maps to 1236–1388 (LVATSSHTEF…TQHPVKLKVE (153 aa)). 1249–1256 (GAVGSGKS) lines the ATP pocket. A DECH box motif is present at residues 1338-1341 (DECH). Positions 1407–1566 (DMIQHGNNLL…GLPVTTQSVS (160 aa)) constitute a Helicase C-terminal domain. The Nuclear localization signal motif lies at 1891–1900 (KKGKQKGSTR). At Tyr1915 the chain carries O-(5'-phospho-RNA)-tyrosine. The Peptidase C4 domain maps to 2042–2260 (SKSVYKGLRD…IAWGSLNLVE (219 aa)). Residues His2087, Asp2122, and Cys2192 each act as for nuclear inclusion protein A activity in the active site. The RdRp catalytic domain occupies 2526–2650 (WVYCHADGSQ…AVSDKDTWLY (125 aa)). The segment at 2799–2836 (SLQSGKEKEGDMDAGKDPKKSTSSSKGAGTSSKDVNVG) is disordered. Residues 2803–2818 (GKEKEGDMDAGKDPKK) show a composition bias toward basic and acidic residues. Positions 2819-2831 (STSSSKGAGTSSK) are enriched in low complexity. Residue Thr3048 is modified to Phosphothreonine.

It belongs to the potyviridae genome polyprotein family. In terms of assembly, interacts with host eIF4E protein (via cap-binding region); this interaction mediates the translation of the VPg-viral RNA conjugates. Part of a complex that comprises VPg, RNA, host EIF4E and EIF4G; this interaction mediates the translation of the VPg-viral RNA conjugates. VPg is uridylylated by the polymerase and is covalently attached to the 5'-end of the genomic RNA. This uridylylated form acts as a nucleotide-peptide primer for the polymerase. In terms of processing, potyviral RNA is expressed as two polyproteins which undergo post-translational proteolytic processing. Genome polyprotein is processed by NIa-pro, P1 and HC-pro proteinases resulting in the production of at least ten individual proteins. P3N-PIPO polyprotein is cleaved by P1 and HC-pro proteinases resulting in the production of three individual proteins. The P1 proteinase and the HC-pro cleave only their respective C-termini autocatalytically. 6K1 is essential for proper proteolytic separation of P3 from CI.

The protein localises to the host cytoplasmic vesicle. Its subcellular location is the host nucleus. It is found in the virion. The catalysed reaction is RNA(n) + a ribonucleoside 5'-triphosphate = RNA(n+1) + diphosphate. It carries out the reaction Hydrolyzes glutaminyl bonds, and activity is further restricted by preferences for the amino acids in P6 - P1' that vary with the species of potyvirus, e.g. Glu-Xaa-Xaa-Tyr-Xaa-Gln-|-(Ser or Gly) for the enzyme from tobacco etch virus. The natural substrate is the viral polyprotein, but other proteins and oligopeptides containing the appropriate consensus sequence are also cleaved.. It catalyses the reaction Hydrolyzes a Gly-|-Gly bond at its own C-terminus, commonly in the sequence -Tyr-Xaa-Val-Gly-|-Gly, in the processing of the potyviral polyprotein.. Functionally, required for aphid transmission and also has proteolytic activity. Only cleaves a Gly-Gly dipeptide at its own C-terminus. Interacts with virions and aphid stylets. Acts as a suppressor of RNA-mediated gene silencing, also known as post-transcriptional gene silencing (PTGS), a mechanism of plant viral defense that limits the accumulation of viral RNAs. May have RNA-binding activity. Has helicase activity. It may be involved in replication. In terms of biological role, indispensable for virus replication. Reduces the abundance of host transcripts related to jasmonic acid biosynthesis therefore altering the host defenses. In order to increase its own stability, decreases host protein degradation pathways. Its function is as follows. Indispensable for virus replication. Functionally, mediates the cap-independent, EIF4E-dependent translation of viral genomic RNAs. Binds to the cap-binding site of host EIF4E and thus interferes with the host EIF4E-dependent mRNA export and translation. VPg-RNA directly binds EIF4E and is a template for transcription. Also forms trimeric complexes with EIF4E-EIF4G, which are templates for translation. Has RNA-binding and proteolytic activities. In terms of biological role, an RNA-dependent RNA polymerase that plays an essential role in the virus replication. Its function is as follows. Involved in aphid transmission, cell-to-cell and systemis movement, encapsidation of the viral RNA and in the regulation of viral RNA amplification. The sequence is that of Genome polyprotein from Soybean mosaic virus (strain G2) (SMV).